Here is a 132-residue protein sequence, read N- to C-terminus: uncharacterized protein (132 aa).

Helical transmembrane passes span 18–38 (MLFI…FIGI), 50–70 (IIYF…GVFI), and 71–91 (VVPL…LYLI).

It localises to the cell membrane. This is an uncharacterized protein from Bacillus subtilis (strain 168).